Consider the following 396-residue polypeptide: MNLIKMSDIDLSGKRVLIREDLNVPIKDGMITSDQRLQAALPTIKSALDSGAAVIVLSHLGRPEEGKYEKKFSLEPVADYLRENLEYPVRFVKDYLTGVDVNPGELVVCENVRFNPGEKGNDEALAKKLASLCDVFVMDAFGTAHRAQASTYGVAQYAPVAVAGPLLIRELEALNQVLKAPKKPIVAIVGGAKVSSKLSLLKQLVGMVDVLIPGGGIANTFLKAQGFEIGISLYEPDLLDEARHILILAKEKGCQIPLPTDVVVGKTFSETCPAFNKSLSNVAADDMILDIGPETIRDYVDLIHEANTIIWNGPVGVFEFPQFAYGTRAIAIAIAESDAFSIAGGGDTLAAVDLYDLNQQISYISTGGGAFLECLEGKTLPAVAILQERAKHVKTN.

Substrate contacts are provided by residues 21 to 23 (DLN), Arg-36, 59 to 62 (HLGR), Arg-113, and Arg-146. ATP contacts are provided by residues Lys-197, Glu-319, and 345–348 (GGDT).

Belongs to the phosphoglycerate kinase family. As to quaternary structure, monomer.

It localises to the cytoplasm. The catalysed reaction is (2R)-3-phosphoglycerate + ATP = (2R)-3-phospho-glyceroyl phosphate + ADP. The protein operates within carbohydrate degradation; glycolysis; pyruvate from D-glyceraldehyde 3-phosphate: step 2/5. This Legionella pneumophila (strain Corby) protein is Phosphoglycerate kinase.